The primary structure comprises 398 residues: Subtilisin-like protease CPC735_050320 (398 aa).

The first 19 residues, 1-19 (MVFLGKILPLALAALSVNG), serve as a signal peptide directing secretion. Positions 20-117 (AEILSAPGAE…IERDQIMKAS (98 aa)) are excised as a propeptide. The Inhibitor I9 domain maps to 35 to 115 (YIVVMKEGTS…AYIERDQIMK (81 aa)). Residues 127–398 (SWGLARVSSR…NRLINNGVSQ (272 aa)) form the Peptidase S8 domain. Residues Asp-159 and His-190 each act as charge relay system in the active site. N-linked (GlcNAc...) asparagine glycosylation is found at Asn-220 and Asn-250. Ser-344 (charge relay system) is an active-site residue.

It belongs to the peptidase S8 family.

The protein resides in the secreted. Its function is as follows. Secreted subtilisin-like serine protease with keratinolytic activity that contributes to pathogenicity. The protein is Subtilisin-like protease CPC735_050320 of Coccidioides posadasii (strain C735) (Valley fever fungus).